The chain runs to 393 residues: Stearoyl-[acyl-carrier-protein] 9-desaturase, chloroplastic (393 aa).

The N-terminal 30 residues, 1-30 (MALNINGVSLKSHKMLPFPCSSARSERVFM), are a transit peptide targeting the chloroplast. Positions 135, 173, 176, 259, and 262 each coordinate Fe cation.

Belongs to the fatty acid desaturase type 2 family. As to quaternary structure, homodimer. The cofactor is Fe(2+).

Its subcellular location is the plastid. The protein localises to the chloroplast. It catalyses the reaction octadecanoyl-[ACP] + 2 reduced [2Fe-2S]-[ferredoxin] + O2 + 2 H(+) = (9Z)-octadecenoyl-[ACP] + 2 oxidized [2Fe-2S]-[ferredoxin] + 2 H2O. Its pathway is lipid metabolism; fatty acid metabolism. Functionally, converts stearoyl-ACP to oleoyl-ACP by introduction of a cis double bond between carbons 9 and 10 of the acyl chain. The sequence is that of Stearoyl-[acyl-carrier-protein] 9-desaturase, chloroplastic from Solanum tuberosum (Potato).